Reading from the N-terminus, the 291-residue chain is Small ribosomal subunit biogenesis GTPase RsgA 2 (291 aa).

The CP-type G domain occupies 63–221 (ENALVRPPVA…VADTPGFSSI (159 aa)). GTP is bound by residues 112–115 (SKMD) and 164–172 (GQSGVGKST). 4 residues coordinate Zn(2+): Cys245, Cys250, His252, and Cys258.

This sequence belongs to the TRAFAC class YlqF/YawG GTPase family. RsgA subfamily. As to quaternary structure, monomer. Associates with 30S ribosomal subunit, binds 16S rRNA. The cofactor is Zn(2+).

Its subcellular location is the cytoplasm. One of several proteins that assist in the late maturation steps of the functional core of the 30S ribosomal subunit. Helps release RbfA from mature subunits. May play a role in the assembly of ribosomal proteins into the subunit. Circularly permuted GTPase that catalyzes slow GTP hydrolysis, GTPase activity is stimulated by the 30S ribosomal subunit. This is Small ribosomal subunit biogenesis GTPase RsgA 2 from Listeria monocytogenes serovar 1/2a (strain ATCC BAA-679 / EGD-e).